The primary structure comprises 549 residues: Hydroxylamine reductase (549 aa).

Residues Cys-5, Cys-8, Cys-17, and Cys-23 each coordinate [4Fe-4S] cluster. The hybrid [4Fe-2O-2S] cluster site is built by His-244, Glu-268, Cys-312, Cys-403, Cys-431, Cys-456, Glu-491, and Lys-493. Cysteine persulfide is present on Cys-403.

It belongs to the HCP family. Requires [4Fe-4S] cluster as cofactor. Hybrid [4Fe-2O-2S] cluster is required as a cofactor.

It localises to the cytoplasm. It catalyses the reaction A + NH4(+) + H2O = hydroxylamine + AH2 + H(+). In terms of biological role, catalyzes the reduction of hydroxylamine to form NH(3) and H(2)O. The protein is Hydroxylamine reductase of Clostridium perfringens (strain 13 / Type A).